A 325-amino-acid polypeptide reads, in one-letter code: Tetraacyldisaccharide 4'-kinase (325 aa).

55–62 (TAGGNGKT) contacts ATP.

The protein belongs to the LpxK family.

It carries out the reaction a lipid A disaccharide + ATP = a lipid IVA + ADP + H(+). Its pathway is glycolipid biosynthesis; lipid IV(A) biosynthesis; lipid IV(A) from (3R)-3-hydroxytetradecanoyl-[acyl-carrier-protein] and UDP-N-acetyl-alpha-D-glucosamine: step 6/6. In terms of biological role, transfers the gamma-phosphate of ATP to the 4'-position of a tetraacyldisaccharide 1-phosphate intermediate (termed DS-1-P) to form tetraacyldisaccharide 1,4'-bis-phosphate (lipid IVA). This chain is Tetraacyldisaccharide 4'-kinase, found in Salmonella typhi.